Here is a 123-residue protein sequence, read N- to C-terminus: Small ribosomal subunit protein uS12 (123 aa).

Residue Asp89 is modified to 3-methylthioaspartic acid.

Belongs to the universal ribosomal protein uS12 family. As to quaternary structure, part of the 30S ribosomal subunit. Contacts proteins S8 and S17. May interact with IF1 in the 30S initiation complex.

Its function is as follows. With S4 and S5 plays an important role in translational accuracy. Interacts with and stabilizes bases of the 16S rRNA that are involved in tRNA selection in the A site and with the mRNA backbone. Located at the interface of the 30S and 50S subunits, it traverses the body of the 30S subunit contacting proteins on the other side and probably holding the rRNA structure together. The combined cluster of proteins S8, S12 and S17 appears to hold together the shoulder and platform of the 30S subunit. The protein is Small ribosomal subunit protein uS12 of Bradyrhizobium diazoefficiens (strain JCM 10833 / BCRC 13528 / IAM 13628 / NBRC 14792 / USDA 110).